The primary structure comprises 1029 residues: Translation initiation factor IF-2 (1029 aa).

Positions Arg73–Glu441 are disordered. 2 stretches are compositionally biased toward acidic residues: residues Thr106–Glu121 and Ala148–Glu177. The span at Ala183–Lys196 shows a compositional bias: basic and acidic residues. 3 stretches are compositionally biased toward acidic residues: residues Thr213–Ala234, Thr242–Val258, and Ala279–Gly322. Basic and acidic residues predominate over residues Lys358–Asp372. Over residues Lys373–Lys386 the composition is skewed to basic residues. Residues Gln400 to Gln411 show a composition bias toward low complexity. Residues Arg417–Arg427 are compositionally biased toward basic residues. Residues His428–Glu441 show a composition bias toward basic and acidic residues. Residues Pro524–Lys696 enclose the tr-type G domain. The tract at residues Gly533–Thr540 is G1. Gly533–Thr540 is a binding site for GTP. The segment at Gly558 to His562 is G2. Residues Asp582 to Gly585 form a G3 region. GTP is bound by residues Asp582–His586 and Asn636–Asp639. Positions Asn636–Asp639 are G4. Positions Ser672–Lys674 are G5.

It belongs to the TRAFAC class translation factor GTPase superfamily. Classic translation factor GTPase family. IF-2 subfamily.

It localises to the cytoplasm. One of the essential components for the initiation of protein synthesis. Protects formylmethionyl-tRNA from spontaneous hydrolysis and promotes its binding to the 30S ribosomal subunits. Also involved in the hydrolysis of GTP during the formation of the 70S ribosomal complex. This chain is Translation initiation factor IF-2, found in Salinibacter ruber (strain DSM 13855 / M31).